Consider the following 562-residue polypeptide: Arginine--tRNA ligase (562 aa).

The 'HIGH' region motif lies at 121–131 (PNIAKPFSVGH).

It belongs to the class-I aminoacyl-tRNA synthetase family. As to quaternary structure, monomer.

The protein resides in the cytoplasm. The catalysed reaction is tRNA(Arg) + L-arginine + ATP = L-arginyl-tRNA(Arg) + AMP + diphosphate. The protein is Arginine--tRNA ligase of Streptococcus suis (strain 98HAH33).